A 591-amino-acid chain; its full sequence is UvrABC system protein C (591 aa).

Positions 14–91 constitute a GIY-YIG domain; the sequence is DQPGCYLMKD…IKKHDPKYNV (78 aa). Residues 196-231 form the UVR domain; that stretch reads KEVKVELEKKMHKAAEELNFERAKELRDTLGYMEAV.

Belongs to the UvrC family. In terms of assembly, interacts with UvrB in an incision complex.

The protein resides in the cytoplasm. Its function is as follows. The UvrABC repair system catalyzes the recognition and processing of DNA lesions. UvrC both incises the 5' and 3' sides of the lesion. The N-terminal half is responsible for the 3' incision and the C-terminal half is responsible for the 5' incision. In Halalkalibacterium halodurans (strain ATCC BAA-125 / DSM 18197 / FERM 7344 / JCM 9153 / C-125) (Bacillus halodurans), this protein is UvrABC system protein C.